The following is a 221-amino-acid chain: Riboflavin kinase (221 aa).

Residues 1–89 form an H-T-H motif-like region; that stretch reads MENIYIALKT…ISSILRFSQE (89 aa). The riboflavin kinase stretch occupies residues 90-221; sequence LKLVGAVQDG…EVLASIDGKL (132 aa). 99–104 contributes to the CDP binding site; that stretch reads GLGEGK. Mg(2+) contacts are provided by threonine 128 and asparagine 130. Positions 185 and 192 each coordinate FMN. Position 197-200 (197-200) interacts with CDP; the sequence is KYLR.

This sequence belongs to the archaeal riboflavin kinase family. Mg(2+) is required as a cofactor.

The catalysed reaction is riboflavin + CTP = CDP + FMN + H(+). It functions in the pathway cofactor biosynthesis; FMN biosynthesis; FMN from riboflavin (CTP route): step 1/1. Its function is as follows. Catalyzes the CTP-dependent phosphorylation of riboflavin (vitamin B2) to form flavin mononucleotide (FMN). The protein is Riboflavin kinase (ribK) of Picrophilus torridus (strain ATCC 700027 / DSM 9790 / JCM 10055 / NBRC 100828 / KAW 2/3).